We begin with the raw amino-acid sequence, 188 residues long: Threonylcarbamoyl-AMP synthase (188 aa).

Residues 3–188 enclose the YrdC-like domain; sequence QLHPSDIKDV…RSGKILRNGQ (186 aa).

The protein belongs to the SUA5 family. TsaC subfamily.

It localises to the cytoplasm. It carries out the reaction L-threonine + hydrogencarbonate + ATP = L-threonylcarbamoyladenylate + diphosphate + H2O. In terms of biological role, required for the formation of a threonylcarbamoyl group on adenosine at position 37 (t(6)A37) in tRNAs that read codons beginning with adenine. Catalyzes the conversion of L-threonine, HCO(3)(-)/CO(2) and ATP to give threonylcarbamoyl-AMP (TC-AMP) as the acyladenylate intermediate, with the release of diphosphate. The chain is Threonylcarbamoyl-AMP synthase from Shewanella oneidensis (strain ATCC 700550 / JCM 31522 / CIP 106686 / LMG 19005 / NCIMB 14063 / MR-1).